Reading from the N-terminus, the 456-residue chain is tRNA modification GTPase MnmE (456 aa).

Residues arginine 24, glutamate 81, and lysine 120 each coordinate (6S)-5-formyl-5,6,7,8-tetrahydrofolate. Residues 216–379 enclose the TrmE-type G domain; that stretch reads GMTVVIAGRP…LRDHLKACMG (164 aa). Asparagine 226 is a binding site for K(+). GTP is bound by residues 226 to 231, 245 to 251, 270 to 273, and 335 to 338; these read NAGKSS, TEIAGTT, DTAG, and NKAD. Residue serine 230 participates in Mg(2+) binding. Residues threonine 245, isoleucine 247, and threonine 250 each coordinate K(+). Threonine 251 is a Mg(2+) binding site. (6S)-5-formyl-5,6,7,8-tetrahydrofolate is bound at residue lysine 456.

This sequence belongs to the TRAFAC class TrmE-Era-EngA-EngB-Septin-like GTPase superfamily. TrmE GTPase family. In terms of assembly, homodimer. Heterotetramer of two MnmE and two MnmG subunits. Requires K(+) as cofactor.

It localises to the cytoplasm. Its function is as follows. Exhibits a very high intrinsic GTPase hydrolysis rate. Involved in the addition of a carboxymethylaminomethyl (cmnm) group at the wobble position (U34) of certain tRNAs, forming tRNA-cmnm(5)s(2)U34. The sequence is that of tRNA modification GTPase MnmE from Pseudomonas fluorescens (strain Pf0-1).